Reading from the N-terminus, the 848-residue chain is Aryl hydrocarbon receptor (848 aa).

The propeptide occupies 1–9; the sequence is MSSGANITY. Positions 1–38 are disordered; that stretch reads MSSGANITYASRKRRKPVQKTVKPIPAEGIKSNPSKRH. Short sequence motifs (nuclear localization signal) lie at residues 12 to 15 and 36 to 41; these read RKRR and KRHRDR. A bHLH domain is found at 26–79; it reads PAEGIKSNPSKRHRDRLNTELDRLASLLPFPQDVINKLDKLSVLRLSVSYLRAK. Residues 37 to 65 form a DNA-binding region; sequence RHRDRLNTELDRLASLLPFPQDVINKLDK. Required for maintaining the overall integrity of the AHR:ARNT heterodimer and its transcriptional activity stretches follow at residues 49–81, 116–124, and 260–262; these read LASL…AKSF, LLQALNGFV, and FAI. Positions 63–71 match the Nuclear export signal motif; that stretch reads LDKLSVLRL. In terms of domain architecture, PAS 1 spans 111 to 175; it reads QEGEFLLQAL…AEFQRQLHWA (65 aa). The PAS 2 domain maps to 266–336; that stretch reads LQPPSILEIR…CAESHIRMIK (71 aa). The region spanning 342–383 is the PAC domain; the sequence is MTVFRLLAKHSRWRWVQSNARLIYRNGRPDYIIVTQRPLTDE. The tract at residues 421–449 is disordered; it reads LPIRTKSNTSRKDWAPQSTPSKDSFHPSS. Residues 436–449 show a composition bias toward polar residues; the sequence is PQSTPSKDSFHPSS.

Homodimer. Heterodimer; efficient DNA binding requires dimerization with another bHLH protein. Interacts with ARNT; the heterodimer ARNT:AHR binds to core DNA sequence 5'-TGCGTG-3' within the dioxin response element (DRE) of target gene promoters and activates their transcription. Binds MYBBP1A. Interacts with coactivators including SRC-1, RIP140 and NOCA7, and with the corepressor SMRT. Interacts with NEDD8 and IVNS1ABP. Interacts with BMAL1. Interacts with HSP90AB1. Interacts with TIPARP; leading to mono-ADP-ribosylation of AHR and subsequent inhibition of AHR. Mono-ADP-ribosylated, leading to inhibit transcription activator activity of AHR.

It is found in the cytoplasm. The protein localises to the nucleus. In terms of biological role, ligand-activated transcription factor that enables cells to adapt to changing conditions by sensing compounds from the environment, diet, microbiome and cellular metabolism, and which plays important roles in development, immunity and cancer. Upon ligand binding, translocates into the nucleus, where it heterodimerizes with ARNT and induces transcription by binding to xenobiotic response elements (XRE). Regulates a variety of biological processes, including angiogenesis, hematopoiesis, drug and lipid metabolism, cell motility and immune modulation. Xenobiotics can act as ligands: upon xenobiotic-binding, activates the expression of multiple phase I and II xenobiotic chemical metabolizing enzyme genes (such as the CYP1A1 gene). Mediates biochemical and toxic effects of halogenated aromatic hydrocarbons. Next to xenobiotics, natural ligands derived from plants, microbiota, and endogenous metabolism are potent AHR agonists. Tryptophan (Trp) derivatives constitute an important class of endogenous AHR ligands. Acts as a negative regulator of anti-tumor immunity: indoles and kynurenic acid generated by Trp catabolism act as ligand and activate AHR, thereby promoting AHR-driven cancer cell motility and suppressing adaptive immunity. Regulates the circadian clock by inhibiting the basal and circadian expression of the core circadian component PER1. Inhibits PER1 by repressing the CLOCK-BMAL1 heterodimer mediated transcriptional activation of PER1. The heterodimer ARNT:AHR binds to core DNA sequence 5'-TGCGTG-3' within the dioxin response element (DRE) of target gene promoters and activates their transcription. The chain is Aryl hydrocarbon receptor (Ahr) from Mus musculus castaneus (Southeastern Asian house mouse).